The sequence spans 216 residues: Probable transaldolase (216 aa).

Lysine 83 acts as the Schiff-base intermediate with substrate in catalysis.

This sequence belongs to the transaldolase family. Type 3B subfamily.

The protein resides in the cytoplasm. The catalysed reaction is D-sedoheptulose 7-phosphate + D-glyceraldehyde 3-phosphate = D-erythrose 4-phosphate + beta-D-fructose 6-phosphate. The protein operates within carbohydrate degradation; pentose phosphate pathway; D-glyceraldehyde 3-phosphate and beta-D-fructose 6-phosphate from D-ribose 5-phosphate and D-xylulose 5-phosphate (non-oxidative stage): step 2/3. Functionally, transaldolase is important for the balance of metabolites in the pentose-phosphate pathway. The protein is Probable transaldolase of Sphingopyxis alaskensis (strain DSM 13593 / LMG 18877 / RB2256) (Sphingomonas alaskensis).